Reading from the N-terminus, the 292-residue chain is 33 kDa chaperonin (292 aa).

Cystine bridges form between Cys230-Cys232 and Cys263-Cys266.

This sequence belongs to the HSP33 family. In terms of processing, under oxidizing conditions two disulfide bonds are formed involving the reactive cysteines. Under reducing conditions zinc is bound to the reactive cysteines and the protein is inactive.

The protein localises to the cytoplasm. Its function is as follows. Redox regulated molecular chaperone. Protects both thermally unfolding and oxidatively damaged proteins from irreversible aggregation. Plays an important role in the bacterial defense system toward oxidative stress. This Serratia proteamaculans (strain 568) protein is 33 kDa chaperonin.